We begin with the raw amino-acid sequence, 1467 residues long: MLRDELLRSKNDEIARCLLSRKRKLSELYFATVGFAGATENAPTNALYHQKEQTFLDANDLTKGRYFNEATLPPFPDFAALIPRPEEQHSSLEITEPVVQTDDVSSVIAPKAEGAVRGIAPSFQQQEGQTAQVIEQRLVEDSLKKDDARIHQQPALATTSEIPQVANSPTTPAQPDQLPQKASFAVPDTPPTSTSHESVDASVSPALKGLPPSEVAPPRAVSNQLPSAQRKPESRPSLVLAQPSEDQPLSPASSAGPYSNNTPAPVAVSPDTSPAEEVTEGADEVALSPKRVGPVQLQPGLVPSTPDEQLQLEAAQSLQQNALASKSIGDVTTASSLSNEVIKEDVGPTPSAAADSSKETQDQTSTSVEAPEPKRPDGVVVAPEESQPPAQSIQEETQSQVGAEVKVVASTTPAGKKPTAAAVLPAQPERMTTRVSSGAIRHKSVSEILGETPKPSAVQPEKAHAIEKPADMVRAPASASPESAAKMRLKDRKAREKERSKLSTVVFPKQQQQQQQQQEKDDSLDIVRQYAGELARLNEEQDYLFTLFQNKAYAPPRGTNLSTLLASAHKTLTTSNHLLEYQEQMDCRTLRRIYALQNANRWPLRQLKRSVEPPRQGTHWDVLLDHMKWMRTDYREERKWKIAAAKSCADWCAEYVNSDPEHRALLRVPCRIPSKFEKKEAHASSMISPPEETTEEMLVVSQPTPDLIPSAEDESVSDGFNDEIRHDIRDTVAPAAIFSLGSDEFTFSLDMTPAAQKLLDELPIYTPVKIAPGANVPMFEQPPDSAWKTELLPVSKYASGRIKFHETESPRKRSRYDYSQYDSNPEHGMLDLPPEQTNVALFRPENKPIRDRIHPGHSFRPPTEYPMPSVGFFESRQSSQWTYAEDDELRRLVKEYSYNWSLISSCLTPSSQFTSGAERRTPWECFERWVGLEGLPADMSKTQYFRAYHQRIETAQRTVLAQQQAAQQQQQQQQQQQQQGGNNSGQAQPPIRRRTTQPVRVDRRRSSKHLALLDAMRKLAKKRETMLQKQQHASHLASLRKVNDANQPKPPISSPAEFSRLKYDRELKLQERQEQYRQQMIAQQRANLAAQRAGQIPSQQPMMNAPPGRTPNGIPHNPGTPGIPGATPNGMHNGMPNALPNGIPPGMGVSQGRPHMQGVPAGGPPMNGPIPPNPMAMKMMPQTGMPQGPGGRPGMPMQTSPDNTRVMREANRLQEQQRILQSRQQQPQPPQHQQPQAQQAQQQFHNQQQFGPQGSHSPNMNLPNVNGTPNNPAMMAAIQAGSGMQSPSLHNAMPQGVSTPSPRMGQPNLLSGGVVPTISSIQSQIQRSNPNMPPEQVNKLATDRLHQYQQQRMSQVAMNAAAGNMASVQANYQVPHDGNFQSPQPGMNGTPGMQVPQSQGFSPMMRVPQPAQQNRMGVGNSPAMNVALPQQSRSATPQTQRSGSAQAGPVPGSSKSPHPPQAQIPSG.

3 disordered regions span residues 154 to 314 (PALA…QLEA), 329 to 402 (GDVT…SQVG), and 469 to 522 (PADM…EKDD). 4 stretches are compositionally biased toward polar residues: residues 155 to 174 (ALAT…TPAQ), 244 to 263 (SEDQ…NNTP), 330 to 339 (DVTTASSLSN), and 388 to 401 (PPAQ…QSQV). The segment covering 475–484 (APASASPESA) has biased composition (low complexity). In terms of domain architecture, HSA spans 607–686 (LKRSVEPPRQ…EKKEAHASSM (80 aa)). The Myb-like domain occupies 877–935 (QSSQWTYAEDDELRRLVKEYSYNWSLISSCLTPSSQFTSGAERRTPWECFERWVGLEGL). Positions 970 to 979 (QQQQQQQQQQ) are enriched in low complexity. Disordered regions lie at residues 970 to 1058 (QQQQ…PAEF), 1113 to 1202 (GIPH…TSPD), 1216 to 1307 (QQRI…MGQP), and 1377 to 1467 (DGNF…IPSG). Residues 1162–1174 (GGPPMNGPIPPNP) are compositionally biased toward pro residues. Composition is skewed to low complexity over residues 1175–1186 (MAMKMMPQTGMP), 1216–1226 (QQRILQSRQQQ), and 1233–1253 (QQPQ…FGPQ). Polar residues-rich tracts occupy residues 1254–1271 (GSHS…TPNN) and 1428–1445 (LPQQ…SGSA). Residues 1457–1467 (PHPPQAQIPSG) show a composition bias toward pro residues.

This sequence belongs to the EAF1 family. As to quaternary structure, component of the NuA4 histone acetyltransferase complex.

Its subcellular location is the nucleus. Functionally, component of the NuA4 histone acetyltransferase complex which is involved in transcriptional activation of selected genes principally by acetylation of nucleosomal histone H4 and H2A. The NuA4 complex is also involved in DNA repair. The sequence is that of Chromatin modification-related protein eaf1 (eaf1) from Aspergillus fumigatus (strain ATCC MYA-4609 / CBS 101355 / FGSC A1100 / Af293) (Neosartorya fumigata).